The following is a 174-amino-acid chain: MTTIVVLICASALFVQLAFSQCLGRDPVIGFGGAYGSGWGGYDAISPYDGLGYGVPYSAGFIGLSPSNLAASCGGALAVNSLSPTTPTGLTVASENTIEGNLGIFGQLPFLGAVATDGAFSTGGIGAVLYGCGDGAIGIVSEAPIVAPASIGYGQWPVNAGYKGIGPCGCGGLY.

Residues 1–20 (MTTIVVLICASALFVQLAFS) form the signal peptide. Positions 21–71 (QCLGRDPVIGFGGAYGSGWGGYDAISPYDGLGYGVPYSAGFIGLSPSNLAA) are left arm. Residues 72 to 142 (SCGGALAVNS…GDGAIGIVSE (71 aa)) are central domain. Residues 143 to 174 (APIVAPASIGYGQWPVNAGYKGIGPCGCGGLY) are right arm.

The protein belongs to the chorion protein family.

Its function is as follows. This protein is one of many from the eggshell of the silk moth. This chain is Chorion class CB protein M5H4, found in Bombyx mori (Silk moth).